Here is a 234-residue protein sequence, read N- to C-terminus: Sugar fermentation stimulation protein A (234 aa).

A DNA-binding region (H-T-H motif) is located at residues 201–220 (LLSEAQQRGVEILAYKAEIS).

The protein belongs to the SfsA family.

Binds to DNA non-specifically. Could be a regulatory factor involved in maltose metabolism. The polypeptide is Sugar fermentation stimulation protein A (Shigella dysenteriae serotype 1 (strain Sd197)).